The sequence spans 26 residues: Conotoxin reg6(gamma) (26 aa).

Residues 1-12 are compositionally biased toward acidic residues; sequence RVLEPGXEDPDV. The interval 1–26 is disordered; it reads RVLEPGXEDPDVGEPAGEYEHHLLEX. Residue Glu4 is modified to 4-carboxyglutamate. Pro5 carries the post-translational modification 4-hydroxyproline. Glu8 carries the post-translational modification 4-carboxyglutamate. A 4-hydroxyproline modification is found at Pro10. Glu14 carries the post-translational modification 4-carboxyglutamate. Pro15 carries the post-translational modification 4-hydroxyproline. Residues Glu18, Glu20, and Glu25 each carry the 4-carboxyglutamate modification.

As to expression, expressed by the venom duct.

It localises to the secreted. The sequence is that of Conotoxin reg6(gamma) from Conus regius (Crown cone).